Consider the following 331-residue polypeptide: (+)-aristolochene synthase TS1 (331 aa).

A disordered region spans residues 1–22 (MTRMKNSSSNVTSASGSGSGSG). Over residues 7-16 (SSSNVTSASG) the composition is skewed to low complexity. Positions 102, 231, 235, and 239 each coordinate Mg(2+). Positions 102–106 (DDLLE) match the DDxx(x)D/E motif motif. Residues 231-239 (NDVYSYEKE) carry the NDxxSxxxD/E motif motif. (2E,6E)-farnesyl diphosphate is bound by residues Arg326 and Tyr327.

Belongs to the terpene synthase family. Homodimer. Requires Mg(2+) as cofactor.

The catalysed reaction is (2E,6E)-farnesyl diphosphate = (+)-aristolochene + diphosphate. Its pathway is sesquiterpene biosynthesis; aristolochene biosynthesis; aristolochene from farnesyl diphosphate: step 1/1. Its function is as follows. Catalyzes the cyclization of trans,trans-farnesyl diphosphate (FPP) to the bicyclic sesquiterpene aristolochene. Aristolochene is the likely parent compound for a number of sesquiterpenoid toxins produced by filamentous fungi. The polypeptide is (+)-aristolochene synthase TS1 (Penicillium expansum (Blue mold rot fungus)).